A 244-amino-acid chain; its full sequence is Putative ribosomal recycling factor, mitochondrial (244 aa).

The protein belongs to the RRF family.

The protein resides in the mitochondrion. In terms of biological role, necessary for protein synthesis in mitochondria. Functions as a ribosome recycling factor in mitochondria. The polypeptide is Putative ribosomal recycling factor, mitochondrial (rrf1) (Schizosaccharomyces pombe (strain 972 / ATCC 24843) (Fission yeast)).